The chain runs to 136 residues: Aspartate 1-decarboxylase (136 aa).

The Schiff-base intermediate with substrate; via pyruvic acid role is filled by Ser25. Ser25 carries the pyruvic acid (Ser) modification. Residue Thr57 coordinates substrate. Tyr58 acts as the Proton donor in catalysis. Residue 73–75 (GAA) coordinates substrate.

It belongs to the PanD family. In terms of assembly, heterooctamer of four alpha and four beta subunits. It depends on pyruvate as a cofactor. Post-translationally, is synthesized initially as an inactive proenzyme, which is activated by self-cleavage at a specific serine bond to produce a beta-subunit with a hydroxyl group at its C-terminus and an alpha-subunit with a pyruvoyl group at its N-terminus.

Its subcellular location is the cytoplasm. The catalysed reaction is L-aspartate + H(+) = beta-alanine + CO2. It participates in cofactor biosynthesis; (R)-pantothenate biosynthesis; beta-alanine from L-aspartate: step 1/1. Functionally, catalyzes the pyruvoyl-dependent decarboxylation of aspartate to produce beta-alanine. The sequence is that of Aspartate 1-decarboxylase from Corynebacterium glutamicum (strain R).